The following is a 275-amino-acid chain: 4-diphosphocytidyl-2-C-methyl-D-erythritol kinase (275 aa).

The active site involves Lys14. Position 94 to 104 (94 to 104) interacts with ATP; sequence PMEAGLGGGSA. Residue Asp134 is part of the active site.

Belongs to the GHMP kinase family. IspE subfamily.

It carries out the reaction 4-CDP-2-C-methyl-D-erythritol + ATP = 4-CDP-2-C-methyl-D-erythritol 2-phosphate + ADP + H(+). It functions in the pathway isoprenoid biosynthesis; isopentenyl diphosphate biosynthesis via DXP pathway; isopentenyl diphosphate from 1-deoxy-D-xylulose 5-phosphate: step 3/6. Its function is as follows. Catalyzes the phosphorylation of the position 2 hydroxy group of 4-diphosphocytidyl-2C-methyl-D-erythritol. The protein is 4-diphosphocytidyl-2-C-methyl-D-erythritol kinase of Thermosipho africanus (strain TCF52B).